Here is a 177-residue protein sequence, read N- to C-terminus: Tail tube protein (177 aa).

The protein belongs to the T4-like viruses Gp19 protein family.

The protein resides in the virion. Functionally, structural component of the bacteriophage tail which consists of a contractile sheath, a tube and a baseplate. The central cylindrical segment of the tail consists of a rigid tube, composed of multiple copies of the tail tube protein. During infection, contraction of the sheath drives the central tube through the host outer membrane, creating a channel for DNA ejection from the capsid into the host cell. This is Tail tube protein from Serratia marcescens (Serratia marcescens bacteriophage KSP90).